Here is a 568-residue protein sequence, read N- to C-terminus: DNA mismatch repair protein MutL (568 aa).

It belongs to the DNA mismatch repair MutL/HexB family.

This protein is involved in the repair of mismatches in DNA. It is required for dam-dependent methyl-directed DNA mismatch repair. May act as a 'molecular matchmaker', a protein that promotes the formation of a stable complex between two or more DNA-binding proteins in an ATP-dependent manner without itself being part of a final effector complex. The protein is DNA mismatch repair protein MutL of Nostoc punctiforme (strain ATCC 29133 / PCC 73102).